The chain runs to 190 residues: Small ribosomal subunit protein uS4c (190 aa).

The 61-residue stretch at 92-152 (RLDHVVYRAG…KSPSSAQLPP (61 aa)) folds into the S4 RNA-binding domain.

It belongs to the universal ribosomal protein uS4 family. Part of the 30S ribosomal subunit. Contacts protein S5. The interaction surface between S4 and S5 is involved in control of translational fidelity.

Its subcellular location is the plastid. It localises to the chloroplast. Functionally, one of the primary rRNA binding proteins, it binds directly to 16S rRNA where it nucleates assembly of the body of the 30S subunit. With S5 and S12 plays an important role in translational accuracy. This is Small ribosomal subunit protein uS4c (rps4) from Cyanidioschyzon merolae (strain NIES-3377 / 10D) (Unicellular red alga).